The primary structure comprises 286 residues: 4-diphosphocytidyl-2-C-methyl-D-erythritol kinase (286 aa).

The active site involves Lys-13. ATP is bound at residue 96-106; sequence PMGGGIGGGSS. Asp-138 is an active-site residue.

The protein belongs to the GHMP kinase family. IspE subfamily.

It carries out the reaction 4-CDP-2-C-methyl-D-erythritol + ATP = 4-CDP-2-C-methyl-D-erythritol 2-phosphate + ADP + H(+). It participates in isoprenoid biosynthesis; isopentenyl diphosphate biosynthesis via DXP pathway; isopentenyl diphosphate from 1-deoxy-D-xylulose 5-phosphate: step 3/6. Catalyzes the phosphorylation of the position 2 hydroxy group of 4-diphosphocytidyl-2C-methyl-D-erythritol. The polypeptide is 4-diphosphocytidyl-2-C-methyl-D-erythritol kinase (Pseudoalteromonas atlantica (strain T6c / ATCC BAA-1087)).